A 637-amino-acid polypeptide reads, in one-letter code: Chaperone protein HtpG (637 aa).

The a; substrate-binding stretch occupies residues 1 to 345 (MSQQETHGFQ…SNDLPLNVSR (345 aa)). Residues 346 to 562 (EILQDNQVTT…EGEMSTQMIK (217 aa)) form a b region. The interval 563–637 (LMQAAGQAVP…MNQMLLANAK (75 aa)) is c.

Belongs to the heat shock protein 90 family. Homodimer.

The protein localises to the cytoplasm. Functionally, molecular chaperone. Has ATPase activity. In Shewanella denitrificans (strain OS217 / ATCC BAA-1090 / DSM 15013), this protein is Chaperone protein HtpG.